The sequence spans 131 residues: NADH-quinone oxidoreductase subunit I 2 (131 aa).

4Fe-4S ferredoxin-type domains lie at 42 to 71 and 81 to 110; these read LKVS…VEAG and ERYE…MTGE. [4Fe-4S] cluster is bound by residues C51, C54, C57, C61, C90, C93, C96, and C100.

It belongs to the complex I 23 kDa subunit family. NDH-1 is composed of 14 different subunits. Subunits NuoA, H, J, K, L, M, N constitute the membrane sector of the complex. [4Fe-4S] cluster serves as cofactor.

The protein resides in the cell inner membrane. It carries out the reaction a quinone + NADH + 5 H(+)(in) = a quinol + NAD(+) + 4 H(+)(out). NDH-1 shuttles electrons from NADH, via FMN and iron-sulfur (Fe-S) centers, to quinones in the respiratory chain. The immediate electron acceptor for the enzyme in this species is believed to be ubiquinone. Couples the redox reaction to proton translocation (for every two electrons transferred, four hydrogen ions are translocated across the cytoplasmic membrane), and thus conserves the redox energy in a proton gradient. The protein is NADH-quinone oxidoreductase subunit I 2 of Geobacter metallireducens (strain ATCC 53774 / DSM 7210 / GS-15).